The sequence spans 546 residues: Coatomer subunit delta (546 aa).

The tract at residues 190 to 440 is interaction with DSL1; the sequence is NRFMGSKDPN…VIFTIPVFPQ (251 aa). Residues 236 to 287 form a disordered region; that stretch reads PMATSQRAGHSATGGMKLGGGAGRRAGAAPRPSAISSASSGTPPPPEEDVPE. A compositionally biased stretch (low complexity) spans 260-276; that stretch reads RAGAAPRPSAISSASSG. The residue at position 277 (Thr277) is a Phosphothreonine. The MHD domain maps to 288-546; the sequence is NNGILISIKE…SLKSDEYLVQ (259 aa).

This sequence belongs to the adaptor complexes medium subunit family. Delta-COP subfamily. In terms of assembly, oligomeric complex that consists of at least the alpha, beta, beta', gamma, delta, epsilon and zeta subunits. Interacts with DSL1.

It localises to the cytoplasm. The protein localises to the golgi apparatus membrane. The protein resides in the cytoplasmic vesicle. Its subcellular location is the COPI-coated vesicle membrane. The coatomer is a cytosolic protein complex that binds to dilysine motifs and reversibly associates with Golgi non-clathrin-coated vesicles, which further mediate biosynthetic protein transport from the ER, via the Golgi up to the trans Golgi network. Coatomer complex is required for budding from Golgi membranes, and is essential for the retrograde Golgi-to-ER transport of dilysine-tagged proteins. The sequence is that of Coatomer subunit delta (RET2) from Saccharomyces cerevisiae (strain ATCC 204508 / S288c) (Baker's yeast).